Reading from the N-terminus, the 445-residue chain is Histone acetyltransferase of the MYST family 1 (445 aa).

A Tudor-knot domain is found at 60–118 (LEVGTRVMCQWRDGKYHPVKVIERRKNYNGGHNDYEYYVHYTEFNRRLDEWIKLEQLDL). The MYST-type HAT domain maps to 169-440 (TKVKNIATIE…VDVSKMIWTP (272 aa)). The C2HC MYST-type zinc-finger motif lies at 202–227 (LFFCEFCLSFMKRKEQLQRHMRKCDL). Residue K269 is modified to N6-acetyllysine; by autocatalysis. Residues 312–314 (ILT) and 319–325 (QRKGYGK) contribute to the acetyl-CoA site. Catalysis depends on E345, which acts as the Proton donor/acceptor. S349 provides a ligand contact to acetyl-CoA.

It belongs to the MYST (SAS/MOZ) family. As to quaternary structure, interacts with MRG1 and MRG2. Component of the NuA4 histone acetyltransferase complex. Autoacetylation at Lys-269 is required for proper function. In terms of tissue distribution, expressed in cotyledons, leaves, stems, roots and, at higher levels in developing flowers, particularly in the anthers and gynoecia. Constitutively expressed in all tissues, predominantly in shoot apical meristem.

Its subcellular location is the nucleus. It catalyses the reaction L-lysyl-[protein] + acetyl-CoA = N(6)-acetyl-L-lysyl-[protein] + CoA + H(+). Histone acetyltransferase which may be involved in transcriptional activation. Acetylates 'Lys-5' of histone H4 (H4K5ac). Essential for gametophyte development. Involved in DNA repair after UV-B exposure. Negative regulator of flowering controlling the H4K5ac levels in the FLC chromatin. The chain is Histone acetyltransferase of the MYST family 1 from Arabidopsis thaliana (Mouse-ear cress).